A 241-amino-acid polypeptide reads, in one-letter code: 2,3,4,5-tetrahydropyridine-2,6-dicarboxylate N-acetyltransferase (241 aa).

This sequence belongs to the transferase hexapeptide repeat family. DapH subfamily.

The catalysed reaction is (S)-2,3,4,5-tetrahydrodipicolinate + acetyl-CoA + H2O = L-2-acetamido-6-oxoheptanedioate + CoA. It functions in the pathway amino-acid biosynthesis; L-lysine biosynthesis via DAP pathway; LL-2,6-diaminopimelate from (S)-tetrahydrodipicolinate (acetylase route): step 1/3. In terms of biological role, catalyzes the transfer of an acetyl group from acetyl-CoA to tetrahydrodipicolinate. The protein is 2,3,4,5-tetrahydropyridine-2,6-dicarboxylate N-acetyltransferase of Thermoanaerobacter pseudethanolicus (strain ATCC 33223 / 39E) (Clostridium thermohydrosulfuricum).